The chain runs to 358 residues: uncharacterized protein (358 aa).

It belongs to the SMP-30/CGR1 family.

This is an uncharacterized protein from Saccharomyces cerevisiae (strain ATCC 204508 / S288c) (Baker's yeast).